A 534-amino-acid chain; its full sequence is 5,6-dihydroxyindole-2-carboxylic acid oxidase (534 aa).

Residues 1–23 form the signal peptide; that stretch reads MLGPATFLPLTAALLLLIPGGRA. Residues 24–477 lie on the Lumenal, melanosome side of the membrane; that stretch reads QFPRQCVTPE…WPSRALNFTE (454 aa). 5 disulfides stabilise this stretch: Cys-29–Cys-40, Cys-41–Cys-65, Cys-56–Cys-99, Cys-101–Cys-110, and Cys-113–Cys-122. Asn-96 and Asn-104 each carry an N-linked (GlcNAc...) asparagine glycan. Asn-175 and Asn-181 each carry an N-linked (GlcNAc...) asparagine glycan. His-192, His-215, and His-224 together coordinate Zn(2+). Cystine bridges form between Cys-258-Cys-261 and Cys-290-Cys-303. Residues Asn-304 and Asn-350 are each glycosylated (N-linked (GlcNAc...) asparagine). The Zn(2+) site is built by His-377 and His-381. Asn-385 carries an N-linked (GlcNAc...) asparagine glycan. His-404 provides a ligand contact to Zn(2+). Residues 478–501 traverse the membrane as a helical segment; sequence IITIAVVAALVLVAVIFAAASCAV. The Cytoplasmic segment spans residues 502–534; it reads HRSRKDDVHQPLLGEQYPRYSEEYERDASQSAV.

This sequence belongs to the tyrosinase family. It depends on Cu(2+) as a cofactor. Requires Zn(2+) as cofactor.

The protein resides in the melanosome membrane. The catalysed reaction is 2 5,6-dihydroxyindole-2-carboxylate + O2 = 2 indole-5,6-quinone-2-carboxylate + 2 H2O. It functions in the pathway pigment biosynthesis; melanin biosynthesis. Functionally, plays a role in melanin biosynthesis. Catalyzes the oxidation of 5,6-dihydroxyindole-2-carboxylic acid (DHICA) into indole-5,6-quinone-2-carboxylic acid. May regulate or influence the type of melanin synthesized. Also to a lower extent, capable of hydroxylating tyrosine and producing melanin. The polypeptide is 5,6-dihydroxyindole-2-carboxylic acid oxidase (TYRP1) (Ambystoma mexicanum (Axolotl)).